The chain runs to 435 residues: MNIVILGTQWGDEGKGKIVDMLTEDVAAVVRFQGGHNAGHTLIIDGEKTILRLIPSGILREGVLCLIGNGVVLSPPALIEEIEELNAKGIPVTEQLRISSACNLLLPYHVALDKAREAELGTKAIGTTGRGIGPAYEDKVARRGIRAMDLLHPDQLLEKIKKATAYHNIQLEHYYHQTPLDYQSIYNQLMEFREKIKPMIGDVSALLGNLRRQNKHIIFEGAQGSLLDIDLGTYPYVTSSNTTAGSAATGSGFGPLYFDRVLGITKAYVTRVGAGPFPTELTNEEGKKMAKRGNEFGSVTGRPRRCGWFDVISMRRTIQINSLTGIVLTKLDVLDEFAKIHLCTAYRCDGEVVNEPPFDQSLLESCEPVYEEMPGWQTSTYGLTDYSEMPKEARNYISRLEELLGVPITIISTGPDRKHTIVRQAVFNQVITAKG.

GTP-binding positions include 11 to 17 (GDEGKGK) and 39 to 41 (GHT). D12 (proton acceptor) is an active-site residue. Residues D12 and G39 each contribute to the Mg(2+) site. IMP-binding positions include 12-15 (DEGK), 37-40 (NAGH), T128, R142, Q223, T238, and R302. The active-site Proton donor is H40. 298–304 (SVTGRPR) is a substrate binding site. Residues R304, 330–332 (KLD), and 412–414 (STG) contribute to the GTP site.

This sequence belongs to the adenylosuccinate synthetase family. Homodimer. It depends on Mg(2+) as a cofactor.

The protein localises to the cytoplasm. It catalyses the reaction IMP + L-aspartate + GTP = N(6)-(1,2-dicarboxyethyl)-AMP + GDP + phosphate + 2 H(+). It functions in the pathway purine metabolism; AMP biosynthesis via de novo pathway; AMP from IMP: step 1/2. In terms of biological role, plays an important role in the de novo pathway of purine nucleotide biosynthesis. Catalyzes the first committed step in the biosynthesis of AMP from IMP. The chain is Adenylosuccinate synthetase from Coxiella burnetii (strain RSA 331 / Henzerling II).